A 501-amino-acid polypeptide reads, in one-letter code: Probable Xaa-Pro aminopeptidase pepP (501 aa).

Residues 1–25 form a disordered region; sequence MNYHSFLPLRRSSLSHSTTPPSKSR. Polar residues predominate over residues 12–25; the sequence is SSLSHSTTPPSKSR. Mn(2+) is bound by residues Asp-298, Asp-309, Glu-432, and Glu-472.

Belongs to the peptidase M24B family. Mn(2+) is required as a cofactor.

The enzyme catalyses Release of any N-terminal amino acid, including proline, that is linked to proline, even from a dipeptide or tripeptide.. In terms of biological role, catalyzes the removal of a penultimate prolyl residue from the N-termini of peptides. The polypeptide is Probable Xaa-Pro aminopeptidase pepP (pepP) (Metarhizium acridum (strain CQMa 102)).